The sequence spans 410 residues: Elongation factor Tu, chloroplastic (410 aa).

The region spanning Lys10–Gln214 is the tr-type G domain. The tract at residues Gly19–Thr26 is G1. GTP is bound at residue Gly19–Thr26. Residue Thr26 participates in Mg(2+) binding. Positions Gly60–Asn64 are G2. A G3 region spans residues Asp81–Gly84. GTP is bound by residues Asp81–His85 and Asn136–Asp139. The segment at Asn136 to Asp139 is G4. Residues Ser174–Leu176 form a G5 region.

Belongs to the TRAFAC class translation factor GTPase superfamily. Classic translation factor GTPase family. EF-Tu/EF-1A subfamily.

The protein localises to the plastid. It is found in the chloroplast. It catalyses the reaction GTP + H2O = GDP + phosphate + H(+). Its function is as follows. GTP hydrolase that promotes the GTP-dependent binding of aminoacyl-tRNA to the A-site of ribosomes during protein biosynthesis. The polypeptide is Elongation factor Tu, chloroplastic (tufA) (Mesostigma viride (Green alga)).